A 243-amino-acid chain; its full sequence is Pyridoxine 5'-phosphate synthase (243 aa).

Asn9 contributes to the 3-amino-2-oxopropyl phosphate binding site. A 1-deoxy-D-xylulose 5-phosphate-binding site is contributed by 11-12 (DH). Residue Arg20 participates in 3-amino-2-oxopropyl phosphate binding. His45 functions as the Proton acceptor in the catalytic mechanism. 2 residues coordinate 1-deoxy-D-xylulose 5-phosphate: Arg47 and His52. Residue Glu72 is the Proton acceptor of the active site. Thr102 provides a ligand contact to 1-deoxy-D-xylulose 5-phosphate. The active-site Proton donor is the His193. Residues Gly194 and 215 to 216 (GH) each bind 3-amino-2-oxopropyl phosphate.

This sequence belongs to the PNP synthase family. As to quaternary structure, homooctamer; tetramer of dimers.

Its subcellular location is the cytoplasm. It catalyses the reaction 3-amino-2-oxopropyl phosphate + 1-deoxy-D-xylulose 5-phosphate = pyridoxine 5'-phosphate + phosphate + 2 H2O + H(+). It functions in the pathway cofactor biosynthesis; pyridoxine 5'-phosphate biosynthesis; pyridoxine 5'-phosphate from D-erythrose 4-phosphate: step 5/5. In terms of biological role, catalyzes the complicated ring closure reaction between the two acyclic compounds 1-deoxy-D-xylulose-5-phosphate (DXP) and 3-amino-2-oxopropyl phosphate (1-amino-acetone-3-phosphate or AAP) to form pyridoxine 5'-phosphate (PNP) and inorganic phosphate. The polypeptide is Pyridoxine 5'-phosphate synthase (Photobacterium profundum (strain SS9)).